The chain runs to 95 residues: Progonadoliberin-1 (95 aa).

The first 25 residues, Met-1–Cys-25, serve as a signal peptide directing secretion. Gln-26 is subject to Pyrrolidone carboxylic acid. Gly-35 carries the post-translational modification Glycine amide.

This sequence belongs to the GnRH family.

The protein localises to the secreted. Its function is as follows. Stimulates the secretion of gonadotropins. This chain is Progonadoliberin-1 (gnrh1), found in Sparus aurata (Gilthead sea bream).